A 51-amino-acid chain; its full sequence is Cytochrome b559 subunit beta (51 aa).

The chain crosses the membrane as a helical span at residues 26–42; that stretch reads WLAVHALTVPTIFFLGA. Position 30 (His-30) interacts with heme.

This sequence belongs to the PsbE/PsbF family. In terms of assembly, heterodimer of an alpha subunit and a beta subunit. PSII is composed of 1 copy each of membrane proteins PsbA, PsbB, PsbC, PsbD, PsbE, PsbF, PsbH, PsbI, PsbJ, PsbK, PsbL, PsbM, PsbT, PsbX, Psb30/Ycf12, peripheral proteins PsbO, CyanoQ (PsbQ), PsbU, PsbV and a large number of cofactors. It forms dimeric complexes. The cofactor is heme b.

It localises to the cell inner membrane. Functionally, this b-type cytochrome is tightly associated with the reaction center of photosystem II (PSII). PSII is a light-driven water:plastoquinone oxidoreductase that uses light energy to abstract electrons from H(2)O, generating O(2) and a proton gradient subsequently used for ATP formation. It consists of a core antenna complex that captures photons, and an electron transfer chain that converts photonic excitation into a charge separation. The chain is Cytochrome b559 subunit beta from Gloeobacter violaceus (strain ATCC 29082 / PCC 7421).